An 89-amino-acid chain; its full sequence is uncharacterized protein (89 aa).

The chain crosses the membrane as a helical span at residues Val-67–Trp-86.

The protein resides in the membrane. This is an uncharacterized protein from Bacillus subtilis (strain 168).